The primary structure comprises 292 residues: MEPPQHQHHHHQADQESGNNNNNKSGSGGYTCRQTSTRWTPTTEQIKILKELYYNNAIRSPTADQIQKITARLRQFGKIEGKNVFYWFQNHKARERQKKRFNGTNMTTPSSSPNSVMMAANDHYHPLLHHHHGVPMQRPANSVNVKLNQDHHLYHHNKPYPSFNNGNLNHASSGTECGVVNASNGYMSSHVYGSMEQDCSMNYNNVGGGWANMDHHYSSAPYNFFDRAKPLFGLEGHQEEEECGGDAYLEHRRTLPLFPMHGEDHINGGSGAIWKYGQSEVRPCASLELRLN.

Over residues 1 to 11 (MEPPQHQHHHH) the composition is skewed to basic residues. The interval 1-40 (MEPPQHQHHHHQADQESGNNNNNKSGSGGYTCRQTSTRWT) is disordered. A DNA-binding region (homeobox; WUS-type) is located at residues 34–99 (QTSTRWTPTT…NHKARERQKK (66 aa)).

Belongs to the WUS homeobox family. Interacts with TPL and TPR4. Interacts with BZIP30. In the active shoot meristem, it is specifically expressed in a small cell group underneath the presume position of stem cells. Also expressed in the floral meristem. Expressed in the nucellus of ovule primordia.

It localises to the nucleus. Transcription factor that plays a central role during early embryogenesis, oogenesis and flowering, probably by regulating expression of specific genes. Required to specify stem cell identity in meristems, such as shoot apical meristem (SAM). May induce shoot stem cells activity in order to maintain the stem cell identity. Involved in the developmental root meristem. In shoot apices, it is sufficient to induce the expression of CLV3, a putative ligand of the CLV signaling pathway. Also required to sustain organogenesis in the floral meristem by contributing to the expression of its own repressor, the AGAMOUS (AG) gene at the end of flower development. Binds directly to the 5'-TTAAT[GC][GC]-3' DNA sequence in the regulatory sequence of AG and activates its expression directly. Regulates one important step in ovule development to induce integument formation from the underlying chalazal domain. Participates in the promotion of vegetative to embryonic transition. Required to repress LEC1 expression. This chain is Protein WUSCHEL (WUS), found in Arabidopsis thaliana (Mouse-ear cress).